The following is a 556-amino-acid chain: 2-succinyl-5-enolpyruvyl-6-hydroxy-3-cyclohexene-1-carboxylate synthase (556 aa).

Belongs to the TPP enzyme family. MenD subfamily. In terms of assembly, homodimer. Requires Mg(2+) as cofactor. It depends on Mn(2+) as a cofactor. The cofactor is thiamine diphosphate.

It catalyses the reaction isochorismate + 2-oxoglutarate + H(+) = 5-enolpyruvoyl-6-hydroxy-2-succinyl-cyclohex-3-ene-1-carboxylate + CO2. The protein operates within quinol/quinone metabolism; 1,4-dihydroxy-2-naphthoate biosynthesis; 1,4-dihydroxy-2-naphthoate from chorismate: step 2/7. It participates in quinol/quinone metabolism; menaquinone biosynthesis. Catalyzes the thiamine diphosphate-dependent decarboxylation of 2-oxoglutarate and the subsequent addition of the resulting succinic semialdehyde-thiamine pyrophosphate anion to isochorismate to yield 2-succinyl-5-enolpyruvyl-6-hydroxy-3-cyclohexene-1-carboxylate (SEPHCHC). The protein is 2-succinyl-5-enolpyruvyl-6-hydroxy-3-cyclohexene-1-carboxylate synthase of Saccharopolyspora erythraea (strain ATCC 11635 / DSM 40517 / JCM 4748 / NBRC 13426 / NCIMB 8594 / NRRL 2338).